The sequence spans 96 residues: Cytochrome c2 iso-2 (96 aa).

4 residues coordinate heme c: C10, C13, H14, and M75.

The protein belongs to the cytochrome c family. In terms of processing, binds 1 heme c group covalently per subunit.

Functionally, cytochrome c2 is found mainly in purple, non-sulfur, photosynthetic bacteria where it functions as the electron donor to the oxidized bacteriochlorophyll in the photophosphorylation pathway. However, it may also have a role in the respiratory chain and is found in some non-photosynthetic bacteria. The protein is Cytochrome c2 iso-2 of Magnetospirillum fulvum (Rhodospirillum fulvum).